The sequence spans 544 residues: uncharacterized protein (544 aa).

A signal peptide spans M1–Y22.

This is an uncharacterized protein from Methanocaldococcus jannaschii (strain ATCC 43067 / DSM 2661 / JAL-1 / JCM 10045 / NBRC 100440) (Methanococcus jannaschii).